The primary structure comprises 223 residues: Small ribosomal subunit protein uS3 (223 aa).

A KH type-2 domain is found at 39-108 (IRNFVKKNSY…NILINIVEVK (70 aa)).

It belongs to the universal ribosomal protein uS3 family. In terms of assembly, part of the 30S ribosomal subunit. Forms a tight complex with proteins S10 and S14.

Functionally, binds the lower part of the 30S subunit head. Binds mRNA in the 70S ribosome, positioning it for translation. The protein is Small ribosomal subunit protein uS3 of Clostridium botulinum (strain Hall / ATCC 3502 / NCTC 13319 / Type A).